Reading from the N-terminus, the 479-residue chain is Ribosomal RNA small subunit methyltransferase F (479 aa).

S-adenosyl-L-methionine-binding positions include 125–131 (AAAPGSK), E149, D176, and D194. The active-site Nucleophile is the C247.

This sequence belongs to the class I-like SAM-binding methyltransferase superfamily. RsmB/NOP family.

It is found in the cytoplasm. The enzyme catalyses cytidine(1407) in 16S rRNA + S-adenosyl-L-methionine = 5-methylcytidine(1407) in 16S rRNA + S-adenosyl-L-homocysteine + H(+). In terms of biological role, specifically methylates the cytosine at position 1407 (m5C1407) of 16S rRNA. The chain is Ribosomal RNA small subunit methyltransferase F from Shigella boydii serotype 18 (strain CDC 3083-94 / BS512).